A 325-amino-acid chain; its full sequence is DNA-directed RNA polymerase subunit alpha (325 aa).

An alpha N-terminal domain (alpha-NTD) region spans residues 1–231; it reads MQTSLLKPKI…DQLSVFAALE (231 aa). The tract at residues 246 to 325 is alpha C-terminal domain (alpha-CTD); the sequence is IDPILLRPVD…ENWPPAGLDK (80 aa).

It belongs to the RNA polymerase alpha chain family. In terms of assembly, homodimer. The RNAP catalytic core consists of 2 alpha, 1 beta, 1 beta' and 1 omega subunit. When a sigma factor is associated with the core the holoenzyme is formed, which can initiate transcription.

The enzyme catalyses RNA(n) + a ribonucleoside 5'-triphosphate = RNA(n+1) + diphosphate. In terms of biological role, DNA-dependent RNA polymerase catalyzes the transcription of DNA into RNA using the four ribonucleoside triphosphates as substrates. The chain is DNA-directed RNA polymerase subunit alpha from Burkholderia mallei (strain NCTC 10247).